A 34-amino-acid chain; its full sequence is Brevinin-2GHa (34 aa).

An intrachain disulfide couples C27 to C33.

As to expression, expressed by the skin glands.

Its subcellular location is the secreted. Antimicrobial peptide. Active against the Gram-positive bacteria S.aureus FDA209P (MIC=14.9 ug/ml) and B.subtilis ATCC 6633 (MIC&gt;64 ug/ml), but not active against the Gram-negative bacterium E.coli or the fungus C.albicans. The polypeptide is Brevinin-2GHa (Sylvirana guentheri (Gunther's frog)).